Consider the following 871-residue polypeptide: MANEELTESQQQEDPSQQLPNADEEKGSDSDSNSDSDASSQSSGDDFYISESENEAEGDNTIFNYVRPSDIPPDPNANPETNIRRFNRVLDGKRVKRMQEEEEDKYTFYEDLFDFPRDPERWKEQDLREIWADGPLEMTKPGWDPAWADEDDWDVVNDEIQEGRDPGIQPFYVPYRKPYPAIPDNHYDIENAKGVVEELDRIEEFLQWVSYIFPDGSSYEGTVWDDLAQGKGVYIAENGLVRYEGEWLQNDMEGHGVIDVDIPDIEPIPGSKLEAKMRAEGRIIKRDYMTPEDRKWLEMDVEDSVALTDGNFQVPFYENEEWVTQFGEKPEKGRYRYAGQWKHSRMHGCGVYEVNERILYGRFYFGELLEEEHGCTVDICALHSGLAEVAAAKARMFVNKPDGMIREERGPYGDPQHPYFYEEDDVWMAPGFINQFYEVPEYWETYVGEVDQEREMWLNSFYKAPLRLPMPAELEHWWENVEVTPEFVLLNKEPEPDPNDPSKLVQKEDPVILHTPTGRIINYVEDEKHGIRLFWQPPLEEGEEVDPSKVEFLPLGFDEFYGKEVVVKKEHPIKSFVLGIEKSVKPMLDGLEKWTEEKKKAYEERKEMIQQELELVEAEICLEEAIEDMDEELKKKEQEEEKKTEMGLTEEDEDVLVPVYKEEKVVTAKEKIQENKQEEKYKDDDDEDDDDGDDDDDDDDDDDLGPSSFGSADKGRRNSPFSSSSLSFASCTLFPAVQSRLESSFLAWKQHRAEPSKVNTGIIKGADTASASIHFPPLSSNNARLKMGKVANRGCVQRSYGSSRSQSQLMSLSRLLSCNASSSSSPPDSSSSEYLKDSGLWETPVGDMSVVLSLQIQTKCSDLFAETPAVS.

Residues 1 to 85 (MANEELTESQ…NANPETNIRR (85 aa)) are disordered. A compositionally biased stretch (polar residues) spans 8-20 (ESQQQEDPSQQLP). Residues 30–46 (SDSNSDSDASSQSSGDD) show a composition bias toward low complexity. 3 MORN repeats span residues 219–239 (YEGT…AENG), 243–257 (YEGE…GHGV), and 337–352 (YAGQ…CGVY). A Deamidated asparagine modification is found at N238. Residues 587-647 (MLDGLEKWTE…QEEEKKTEMG (61 aa)) adopt a coiled-coil conformation. Disordered regions lie at residues 631 to 654 (EELK…EDED) and 669 to 721 (KEKI…NSPF). The span at 632–645 (ELKKKEQEEEKKTE) shows a compositional bias: basic and acidic residues. Residue T649 is modified to Phosphothreonine. Positions 669-683 (KEKIQENKQEEKYKD) are enriched in basic and acidic residues. Over residues 684-704 (DDDEDDDDGDDDDDDDDDDDL) the composition is skewed to acidic residues.

Part of the Tic complex. Component of the 1-MD complex, composed of TIC20-I, TIC214, TIC100 and TIC56. Interacts with the translocating preproteins. Hydrolysis of ATP is essential for the formation of this complex. The 1-MD complex interacts with TIC21. In terms of tissue distribution, preferentially expressed in ovules, and moderately expressed in leaves and siliques.

Its subcellular location is the plastid. It is found in the chloroplast inner membrane. Its function is as follows. Involved in protein precursor import into chloroplasts. May be part of an intermediate translocation complex acting as a protein-conducting channel at the inner envelope. Plays an important role during embryogenesis and chloroplast biogenesis. This is Protein TIC 100 from Arabidopsis thaliana (Mouse-ear cress).